Reading from the N-terminus, the 384-residue chain is Early estrogen-induced gene 1 protein (384 aa).

A C2 NT-type domain is found at Ala2–Leu145. The tract at residues Asn129–Lys138 is required for interaction with TNFRSF11A/RANK. The interval Leu173–His315 is disordered. Low complexity predominate over residues Gly183–Ser193. The span at Ser227–Asp254 shows a compositional bias: polar residues. Basic and acidic residues-rich tracts occupy residues Gly280–Pro292 and His299–His315.

The protein belongs to the EEIG family. Part of a complex composed of EEIG1, TNFRSF11A/RANK, PLCG2, GAB2, TEC and BTK; complex formation increases in the presence of TNFSF11/RANKL. Interacts with PRDM1/BLIMP1; following TNFSF11/RANKL stimulation in bone marrow-derived macrophages, the interaction promotes the binding of PRDM1/BLIMP1 to the gene promoter of IRF8.

The protein localises to the nucleus. It localises to the cytoplasm. It is found in the membrane raft. In terms of biological role, key component of TNFSF11/RANKL- and TNF-induced osteoclastogenesis pathways, thereby mediates bone resorption in pathological bone loss conditions. Required for TNFSF11/RANKL-induced osteoclastogenesis via its interaction with TNFRSF11A/RANK, thereby facilitates the downsteam transcription of NFATC1 and activation of PLCG2. Facilitates recruitment of the transcriptional repressor PRDM1/BLIMP1 to the promoter of the anti-osteoclastogenesis gene IRF8, thereby resulting in transcription of osteoclast differentiation factors. May play a role in estrogen action. This chain is Early estrogen-induced gene 1 protein, found in Homo sapiens (Human).